A 427-amino-acid polypeptide reads, in one-letter code: V-type proton ATPase subunit C 2 (427 aa).

Residues 292-319 are disordered; the sequence is HKVKVTPLGNPDRPAAGQTDRERESEGE.

Belongs to the V-ATPase C subunit family. V-ATPase is a heteromultimeric enzyme made up of two complexes: the ATP-hydrolytic V1 complex and the proton translocation V0 complex. The V1 complex consists of three catalytic AB heterodimers that form a heterohexamer, three peripheral stalks each consisting of EG heterodimers, one central rotor including subunits D and F, and the regulatory subunits C and H. The proton translocation complex V0 consists of the proton transport subunit a, a ring of proteolipid subunits c9c'', rotary subunit d, subunits e and f, and the accessory subunits ATP6AP1/Ac45 and ATP6AP2/PRR. In terms of tissue distribution, kidney and placenta.

Subunit of the V1 complex of vacuolar(H+)-ATPase (V-ATPase), a multisubunit enzyme composed of a peripheral complex (V1) that hydrolyzes ATP and a membrane integral complex (V0) that translocates protons. V-ATPase is responsible for acidifying and maintaining the pH of intracellular compartments and in some cell types, is targeted to the plasma membrane, where it is responsible for acidifying the extracellular environment. Subunit C is necessary for the assembly of the catalytic sector of the enzyme and is likely to have a specific function in its catalytic activity. The chain is V-type proton ATPase subunit C 2 (ATP6V1C2) from Homo sapiens (Human).